Consider the following 84-residue polypeptide: Small ribosomal subunit protein uS17 (84 aa).

This sequence belongs to the universal ribosomal protein uS17 family. As to quaternary structure, part of the 30S ribosomal subunit.

Its function is as follows. One of the primary rRNA binding proteins, it binds specifically to the 5'-end of 16S ribosomal RNA. The polypeptide is Small ribosomal subunit protein uS17 (Clostridium beijerinckii (strain ATCC 51743 / NCIMB 8052) (Clostridium acetobutylicum)).